A 313-amino-acid chain; its full sequence is C-type lectin domain-containing protein 162 (313 aa).

Positions 1-17 (MNIFTLLFIYFLSDTVA) are cleaved as a signal peptide. N-linked (GlcNAc...) asparagine glycosylation is found at Asn-28 and Asn-41. One can recognise a C-type lectin domain in the interval 28–145 (NATGCFQFFR…DAMFLPFVCE (118 aa)). Residues Cys-49 and Cys-144 are joined by a disulfide bond. An N-linked (GlcNAc...) asparagine glycan is attached at Asn-213. Residues 244-313 (VSQTETEMSR…RSKTIQISRG (70 aa)) form a disordered region. Residues 250 to 259 (EMSRSRKEKE) are compositionally biased toward basic and acidic residues. Asn-279 and Asn-300 each carry an N-linked (GlcNAc...) asparagine glycan. The segment covering 291-304 (SKEKREREENETIR) has biased composition (basic and acidic residues).

The protein resides in the secreted. The protein is C-type lectin domain-containing protein 162 (clec-162) of Caenorhabditis elegans.